A 320-amino-acid polypeptide reads, in one-letter code: Lipoyl synthase (320 aa).

Basic and acidic residues predominate over residues 1-24 (MIGKLVRDLKIPDQRHPEKAHRPD). Residues 1 to 30 (MIGKLVRDLKIPDQRHPEKAHRPDNVQPKK) form a disordered region. The [4Fe-4S] cluster site is built by C60, C65, C71, C86, C90, C93, and S300. The Radical SAM core domain occupies 72–289 (WSQGHATMMI…EKAAYGKGFL (218 aa)).

Belongs to the radical SAM superfamily. Lipoyl synthase family. The cofactor is [4Fe-4S] cluster.

It is found in the cytoplasm. The catalysed reaction is [[Fe-S] cluster scaffold protein carrying a second [4Fe-4S](2+) cluster] + N(6)-octanoyl-L-lysyl-[protein] + 2 oxidized [2Fe-2S]-[ferredoxin] + 2 S-adenosyl-L-methionine + 4 H(+) = [[Fe-S] cluster scaffold protein] + N(6)-[(R)-dihydrolipoyl]-L-lysyl-[protein] + 4 Fe(3+) + 2 hydrogen sulfide + 2 5'-deoxyadenosine + 2 L-methionine + 2 reduced [2Fe-2S]-[ferredoxin]. Its pathway is protein modification; protein lipoylation via endogenous pathway; protein N(6)-(lipoyl)lysine from octanoyl-[acyl-carrier-protein]: step 2/2. Catalyzes the radical-mediated insertion of two sulfur atoms into the C-6 and C-8 positions of the octanoyl moiety bound to the lipoyl domains of lipoate-dependent enzymes, thereby converting the octanoylated domains into lipoylated derivatives. This Cereibacter sphaeroides (strain ATCC 17029 / ATH 2.4.9) (Rhodobacter sphaeroides) protein is Lipoyl synthase.